Here is a 140-residue protein sequence, read N- to C-terminus: ATP synthase epsilon chain (140 aa).

This sequence belongs to the ATPase epsilon chain family. As to quaternary structure, F-type ATPases have 2 components, CF(1) - the catalytic core - and CF(0) - the membrane proton channel. CF(1) has five subunits: alpha(3), beta(3), gamma(1), delta(1), epsilon(1). CF(0) has three main subunits: a, b and c.

It localises to the cell inner membrane. Its function is as follows. Produces ATP from ADP in the presence of a proton gradient across the membrane. This chain is ATP synthase epsilon chain, found in Laribacter hongkongensis (strain HLHK9).